The following is a 501-amino-acid chain: Aspartyl/glutamyl-tRNA(Asn/Gln) amidotransferase subunit B (501 aa).

The protein belongs to the GatB/GatE family. GatB subfamily. As to quaternary structure, heterotrimer of A, B and C subunits.

It carries out the reaction L-glutamyl-tRNA(Gln) + L-glutamine + ATP + H2O = L-glutaminyl-tRNA(Gln) + L-glutamate + ADP + phosphate + H(+). The enzyme catalyses L-aspartyl-tRNA(Asn) + L-glutamine + ATP + H2O = L-asparaginyl-tRNA(Asn) + L-glutamate + ADP + phosphate + 2 H(+). In terms of biological role, allows the formation of correctly charged Asn-tRNA(Asn) or Gln-tRNA(Gln) through the transamidation of misacylated Asp-tRNA(Asn) or Glu-tRNA(Gln) in organisms which lack either or both of asparaginyl-tRNA or glutaminyl-tRNA synthetases. The reaction takes place in the presence of glutamine and ATP through an activated phospho-Asp-tRNA(Asn) or phospho-Glu-tRNA(Gln). The chain is Aspartyl/glutamyl-tRNA(Asn/Gln) amidotransferase subunit B from Mycobacterium sp. (strain KMS).